Reading from the N-terminus, the 425-residue chain is Serine--tRNA ligase (425 aa).

233-235 lines the L-serine pocket; it reads TAE. 264-266 lines the ATP pocket; that stretch reads RAE. Glu-287 is a binding site for L-serine. Residue 351 to 354 coordinates ATP; that stretch reads EISS. Residue Ser-387 coordinates L-serine.

The protein belongs to the class-II aminoacyl-tRNA synthetase family. Type-1 seryl-tRNA synthetase subfamily. Homodimer. The tRNA molecule binds across the dimer.

It is found in the cytoplasm. It carries out the reaction tRNA(Ser) + L-serine + ATP = L-seryl-tRNA(Ser) + AMP + diphosphate + H(+). The enzyme catalyses tRNA(Sec) + L-serine + ATP = L-seryl-tRNA(Sec) + AMP + diphosphate + H(+). Its pathway is aminoacyl-tRNA biosynthesis; selenocysteinyl-tRNA(Sec) biosynthesis; L-seryl-tRNA(Sec) from L-serine and tRNA(Sec): step 1/1. In terms of biological role, catalyzes the attachment of serine to tRNA(Ser). Is also able to aminoacylate tRNA(Sec) with serine, to form the misacylated tRNA L-seryl-tRNA(Sec), which will be further converted into selenocysteinyl-tRNA(Sec). This chain is Serine--tRNA ligase, found in Clostridium perfringens (strain ATCC 13124 / DSM 756 / JCM 1290 / NCIMB 6125 / NCTC 8237 / Type A).